The following is a 465-amino-acid chain: tRNA modification GTPase MnmE (465 aa).

The (6S)-5-formyl-5,6,7,8-tetrahydrofolate site is built by Arg27, Glu91, and Arg130. The TrmE-type G domain maps to 227-386 (GLSTAIIGRP…LEAKIADLFF (160 aa)). Asn237 is a binding site for K(+). GTP contacts are provided by residues 237–242 (NVGKSS), 256–262 (TDIAGTT), and 281–284 (DTAG). Ser241 is a binding site for Mg(2+). Residues Thr256, Ile258, and Thr261 each contribute to the K(+) site. Thr262 is a binding site for Mg(2+). A (6S)-5-formyl-5,6,7,8-tetrahydrofolate-binding site is contributed by Lys465.

The protein belongs to the TRAFAC class TrmE-Era-EngA-EngB-Septin-like GTPase superfamily. TrmE GTPase family. Homodimer. Heterotetramer of two MnmE and two MnmG subunits. K(+) is required as a cofactor.

The protein localises to the cytoplasm. Functionally, exhibits a very high intrinsic GTPase hydrolysis rate. Involved in the addition of a carboxymethylaminomethyl (cmnm) group at the wobble position (U34) of certain tRNAs, forming tRNA-cmnm(5)s(2)U34. This chain is tRNA modification GTPase MnmE, found in Enterococcus faecalis (strain ATCC 700802 / V583).